The chain runs to 384 residues: Beta-glucuronosyltransferase GlcAT14C (384 aa).

Over 1 to 11 the chain is Cytoplasmic; sequence MKRSHISSPRS. The signal-anchor for type II membrane protein transmembrane segment at 12-34 threads the bilayer; it reads YSRPAISIFGVFLLFLLVLTLSS. At 35–384 the chain is on the lumenal side; the sequence is RKPSDSSSGL…HENFRAKQCK (350 aa). N-linked (GlcNAc...) asparagine glycans are attached at residues asparagine 156, asparagine 285, and asparagine 306.

The protein belongs to the glycosyltransferase 14 family.

It is found in the golgi apparatus membrane. Beta-glucuronosyltransferase involved in the biosynthesis of type II arabinogalactan (AG). Modifies both the beta-1,6-linked galactan and beta-1,3-linked galactan present in type II AG. The polypeptide is Beta-glucuronosyltransferase GlcAT14C (Arabidopsis thaliana (Mouse-ear cress)).